The sequence spans 350 residues: Ribonuclease H2 subunit B (350 aa).

Polar residues predominate over residues 134–151 (QDYSNSSDTGENQKSNSK). A disordered region spans residues 134–153 (QDYSNSSDTGENQKSNSKTN).

It belongs to the RNase H2 subunit B family. Highly divergent. As to quaternary structure, the RNase 2 complex is a heterotrimer composed of the catalytic subunit RNH201 and of the non-catalytic subunits RNH202 and RNH203.

Its subcellular location is the nucleus. In terms of biological role, non catalytic subunit of RNase H2, an endonuclease that specifically degrades the RNA of RNA:DNA hybrids. Participates in DNA replication, possibly by mediating the removal of lagging-strand Okazaki fragment RNA primers during DNA replication. Mediates the excision of single ribonucleotides from DNA:RNA duplexes. The sequence is that of Ribonuclease H2 subunit B (RNH202) from Saccharomyces cerevisiae (strain ATCC 204508 / S288c) (Baker's yeast).